A 63-amino-acid chain; its full sequence is Adipokinetic prohormone type 1 (63 aa).

The first 22 residues, 1 to 22, serve as a signal peptide directing secretion; sequence MVQRCALVVLLVVAVAAALCSA. Position 23 is a pyrrolidone carboxylic acid (Gln-23). A Threonine amide modification is found at Thr-32.

Belongs to the AKH/HRTH/RPCH family.

It localises to the secreted. Functionally, this hormone, released from cells in the corpora cardiaca, causes release of diglycerides from the fat body and stimulation of muscles to use these diglycerides as an energy source during energy-demanding processes. In Locusta migratoria (Migratory locust), this protein is Adipokinetic prohormone type 1.